Consider the following 374-residue polypeptide: Chaperone protein DnaJ (374 aa).

The J domain maps to 5–70 (DYYEVLGLEK…DKKANYDRFG (66 aa)). Residues 137-219 (GVEKSINITR…CHGAGHVRKK (83 aa)) form a CR-type zinc finger. Cys-150, Cys-153, Cys-167, Cys-170, Cys-193, Cys-196, Cys-207, and Cys-210 together coordinate Zn(2+). CXXCXGXG motif repeat units follow at residues 150–157 (CETCGGTG), 167–174 (CDKCGGTG), 193–200 (CDKCGGRG), and 207–214 (CHECHGAG).

The protein belongs to the DnaJ family. As to quaternary structure, homodimer. Zn(2+) serves as cofactor.

It localises to the cytoplasm. Its function is as follows. Participates actively in the response to hyperosmotic and heat shock by preventing the aggregation of stress-denatured proteins and by disaggregating proteins, also in an autonomous, DnaK-independent fashion. Unfolded proteins bind initially to DnaJ; upon interaction with the DnaJ-bound protein, DnaK hydrolyzes its bound ATP, resulting in the formation of a stable complex. GrpE releases ADP from DnaK; ATP binding to DnaK triggers the release of the substrate protein, thus completing the reaction cycle. Several rounds of ATP-dependent interactions between DnaJ, DnaK and GrpE are required for fully efficient folding. Also involved, together with DnaK and GrpE, in the DNA replication of plasmids through activation of initiation proteins. This chain is Chaperone protein DnaJ, found in Clostridium acetobutylicum (strain ATCC 824 / DSM 792 / JCM 1419 / IAM 19013 / LMG 5710 / NBRC 13948 / NRRL B-527 / VKM B-1787 / 2291 / W).